Reading from the N-terminus, the 701-residue chain is Glycine--tRNA ligase beta subunit (701 aa).

This sequence belongs to the class-II aminoacyl-tRNA synthetase family. In terms of assembly, tetramer of two alpha and two beta subunits.

It is found in the cytoplasm. The enzyme catalyses tRNA(Gly) + glycine + ATP = glycyl-tRNA(Gly) + AMP + diphosphate. The sequence is that of Glycine--tRNA ligase beta subunit from Helicobacter pylori (strain G27).